Consider the following 341-residue polypeptide: tRNA dimethylallyltransferase (341 aa).

15–22 (GPTAAGKT) contributes to the ATP binding site. Substrate is bound at residue 17–22 (TAAGKT). Interaction with substrate tRNA regions lie at residues 44–47 (DSAL), 168–172 (QRIQR), 253–258 (RCVGYR), and 302–309 (KRQITWLR).

The protein belongs to the IPP transferase family. In terms of assembly, monomer. Mg(2+) is required as a cofactor.

The enzyme catalyses adenosine(37) in tRNA + dimethylallyl diphosphate = N(6)-dimethylallyladenosine(37) in tRNA + diphosphate. Its function is as follows. Catalyzes the transfer of a dimethylallyl group onto the adenine at position 37 in tRNAs that read codons beginning with uridine, leading to the formation of N6-(dimethylallyl)adenosine (i(6)A). This chain is tRNA dimethylallyltransferase, found in Verminephrobacter eiseniae (strain EF01-2).